A 122-amino-acid polypeptide reads, in one-letter code: Large ribosomal subunit protein eL18 (122 aa).

The protein belongs to the eukaryotic ribosomal protein eL18 family.

In Thermoplasma volcanium (strain ATCC 51530 / DSM 4299 / JCM 9571 / NBRC 15438 / GSS1), this protein is Large ribosomal subunit protein eL18.